The primary structure comprises 73 residues: Large ribosomal subunit protein bL31 (73 aa).

This sequence belongs to the bacterial ribosomal protein bL31 family. Type A subfamily. In terms of assembly, part of the 50S ribosomal subunit. Contacts protein L9.

Functionally, binds the 23S rRNA and interacts with the tRNA in the E site. This is Large ribosomal subunit protein bL31 (rpmE) from Deinococcus radiodurans (strain ATCC 13939 / DSM 20539 / JCM 16871 / CCUG 27074 / LMG 4051 / NBRC 15346 / NCIMB 9279 / VKM B-1422 / R1).